A 134-amino-acid polypeptide reads, in one-letter code: FK506-binding protein 2 (134 aa).

An N-terminal signal peptide occupies residues 1–19 (MRFSIFSTLLVSLATLSTA). One can recognise a PPIase FKBP-type domain in the interval 39-127 (GDTVQMHYKG…IFETELVGID (89 aa)). Positions 131 to 134 (KDEL) match the Prevents secretion from ER motif.

It belongs to the FKBP-type PPIase family. FKBP2 subfamily.

Its subcellular location is the endoplasmic reticulum. The enzyme catalyses [protein]-peptidylproline (omega=180) = [protein]-peptidylproline (omega=0). Inhibited by both FK506 and rapamycin. PPIases accelerate the folding of proteins. It catalyzes the cis-trans isomerization of proline imidic peptide bonds in oligopeptides. The polypeptide is FK506-binding protein 2 (fpr2) (Aspergillus oryzae (strain ATCC 42149 / RIB 40) (Yellow koji mold)).